Consider the following 360-residue polypeptide: Threonine synthase (360 aa).

The residue at position 69 (lysine 69) is an N6-(pyridoxal phosphate)lysine. Residues asparagine 95, 196 to 200, and threonine 326 each bind pyridoxal 5'-phosphate; that span reads GNAGN.

Belongs to the threonine synthase family. Homodimer. Pyridoxal 5'-phosphate is required as a cofactor.

It catalyses the reaction O-phospho-L-homoserine + H2O = L-threonine + phosphate. Its pathway is amino-acid biosynthesis; L-threonine biosynthesis; L-threonine from L-aspartate: step 5/5. Catalyzes the gamma-elimination of phosphate from L-phosphohomoserine and the beta-addition of water to produce L-threonine. In Mycobacterium leprae (strain TN), this protein is Threonine synthase (thrC).